The sequence spans 420 residues: Pyridinium-3,5-bisthiocarboxylic acid mononucleotide nickel insertion protein (420 aa).

Belongs to the LarC family.

The enzyme catalyses Ni(II)-pyridinium-3,5-bisthiocarboxylate mononucleotide = pyridinium-3,5-bisthiocarboxylate mononucleotide + Ni(2+). Involved in the biosynthesis of a nickel-pincer cofactor ((SCS)Ni(II) pincer complex). Binds Ni(2+), and functions in nickel delivery to pyridinium-3,5-bisthiocarboxylic acid mononucleotide (P2TMN), to form the mature cofactor. Is required for the activation of the lactate racemase LarA. May also be involved in the activation of other nickel-pincer cofactor-dependent enzymes. In Lactiplantibacillus plantarum (strain ATCC BAA-793 / NCIMB 8826 / WCFS1) (Lactobacillus plantarum), this protein is Pyridinium-3,5-bisthiocarboxylic acid mononucleotide nickel insertion protein.